The sequence spans 506 residues: MARLALLSVSNKTGLIDLARRLVEEFEFDLISSGGTAQALKDAGLPVTKVADYTGSPEILGGRVKTLHPRIHGGILARRDVASDLTDLENNQIRPIDLVVVNLYPFESTIAKPGVTLAEAVEQIDIGGPAMLRASSKNFAHLTVLCDPAQYDEYLQELRQNNGVASLEFRQKAALKGFLHTASYDSAIASYLSGTQQHTLSGTELQSLRYGENPHQPAAWYQTGTTPTGWTAAEKLQGKELSYNNLVDLEAARRIIAEFTDTPAATIIKHTNPCGTALADTIVEAYQKAFNADATSAFGGIVALNRPIDAATASELTKTFLECVIAPDCDAEAQKILSKKSNVRVLTLADLSTGPKTLVKQIAGGFLVQAADDIAADTSQWQVVTERQPTPDELAELLFAWKVCKHVKSNAIVVTSDRTTLGVGAGQMNRIGSTKIALEQAGDKAKGAILASDGFFPFDDTVRTAAAAGISAIVQPGGSLRDQDSVKAANELGLLMVLTGVRHFLH.

The 146-residue stretch at 1–146 (MARLALLSVS…KNFAHLTVLC (146 aa)) folds into the MGS-like domain.

The protein belongs to the PurH family.

The enzyme catalyses (6R)-10-formyltetrahydrofolate + 5-amino-1-(5-phospho-beta-D-ribosyl)imidazole-4-carboxamide = 5-formamido-1-(5-phospho-D-ribosyl)imidazole-4-carboxamide + (6S)-5,6,7,8-tetrahydrofolate. The catalysed reaction is IMP + H2O = 5-formamido-1-(5-phospho-D-ribosyl)imidazole-4-carboxamide. Its pathway is purine metabolism; IMP biosynthesis via de novo pathway; 5-formamido-1-(5-phospho-D-ribosyl)imidazole-4-carboxamide from 5-amino-1-(5-phospho-D-ribosyl)imidazole-4-carboxamide (10-formyl THF route): step 1/1. The protein operates within purine metabolism; IMP biosynthesis via de novo pathway; IMP from 5-formamido-1-(5-phospho-D-ribosyl)imidazole-4-carboxamide: step 1/1. The sequence is that of Bifunctional purine biosynthesis protein PurH from Nostoc sp. (strain PCC 7120 / SAG 25.82 / UTEX 2576).